The sequence spans 280 residues: 2-dehydro-3-deoxyphosphooctonate aldolase (280 aa).

Belongs to the KdsA family.

Its subcellular location is the cytoplasm. The catalysed reaction is D-arabinose 5-phosphate + phosphoenolpyruvate + H2O = 3-deoxy-alpha-D-manno-2-octulosonate-8-phosphate + phosphate. The protein operates within carbohydrate biosynthesis; 3-deoxy-D-manno-octulosonate biosynthesis; 3-deoxy-D-manno-octulosonate from D-ribulose 5-phosphate: step 2/3. It participates in bacterial outer membrane biogenesis; lipopolysaccharide biosynthesis. The polypeptide is 2-dehydro-3-deoxyphosphooctonate aldolase (Thioalkalivibrio sulfidiphilus (strain HL-EbGR7)).